Here is a 67-residue protein sequence, read N- to C-terminus: MPKMKTKSSAKKRFKITATGKVKAAAAGKRHGMIKRTNKFIRDARGTMVLAEPDGRKVIKNYLPNGL.

Belongs to the bacterial ribosomal protein bL35 family.

The sequence is that of Large ribosomal subunit protein bL35 from Rhizobium etli (strain CIAT 652).